The following is a 435-amino-acid chain: Zinc finger CCCH domain-containing protein 10 (435 aa).

The segment at 1 to 36 (MPDRDSYANGTGSSGGGPGGGGSEEASGAGTGSGGA) is disordered. The span at 12 to 35 (GSSGGGPGGGGSEEASGAGTGSGG) shows a compositional bias: gly residues. 3 C3H1-type zinc fingers span residues 36–63 (ATSD…HPDM), 73–99 (KNEF…HGSK), and 134–161 (KEEV…HLQR). The interval 166–190 (DARGGGGTGGGGSTGSAPPGRRHDL) is disordered. A compositionally biased stretch (gly residues) spans 168-179 (RGGGGTGGGGST). Omega-N-methylarginine occurs at positions 186 and 187. Residues 235–281 (GVECRLLEEENALLRKRVEELKKQVSNLLATNEVLLEQNAQFRNQAK) adopt a coiled-coil conformation. Positions 315–331 (TTLSSQALQPRPVSQQE) are enriched in polar residues. The disordered stretch occupies residues 315 to 363 (TTLSSQALQPRPVSQQELVAPTGAPAAPPTNAAPPAAPPPPPPHLNPEI). Over residues 340–359 (AAPPTNAAPPAAPPPPPPHL) the composition is skewed to pro residues.

The protein resides in the nucleus. Its function is as follows. Specific regulator of miRNA biogenesis. Binds, via the C3H1-type zinc finger domains, to the binding motif 5'-GCAGCGC-3' on microRNA pri-MIR143 and negatively regulates the processing to mature microRNA. This chain is Zinc finger CCCH domain-containing protein 10 (Zc3h10), found in Mus musculus (Mouse).